Reading from the N-terminus, the 334-residue chain is Fructose-1,6-bisphosphatase class 1 (334 aa).

Residues Glu-87, Asp-106, Leu-108, and Asp-109 each coordinate Mg(2+). Substrate is bound by residues 109–112, Asn-208, and Lys-274; that span reads DGSS. Residue Glu-280 coordinates Mg(2+).

The protein belongs to the FBPase class 1 family. In terms of assembly, homotetramer. Requires Mg(2+) as cofactor.

The protein localises to the cytoplasm. The enzyme catalyses beta-D-fructose 1,6-bisphosphate + H2O = beta-D-fructose 6-phosphate + phosphate. It functions in the pathway carbohydrate biosynthesis; gluconeogenesis. This chain is Fructose-1,6-bisphosphatase class 1, found in Psychrobacter sp. (strain PRwf-1).